A 199-amino-acid polypeptide reads, in one-letter code: Ribonuclease HII (199 aa).

The RNase H type-2 domain occupies 9-198 (QFVAGVDEVG…VRAAIEQMNL (190 aa)). A divalent metal cation-binding residues include aspartate 15, glutamate 16, and aspartate 107.

This sequence belongs to the RNase HII family. It depends on Mn(2+) as a cofactor. Requires Mg(2+) as cofactor.

It is found in the cytoplasm. The enzyme catalyses Endonucleolytic cleavage to 5'-phosphomonoester.. Its function is as follows. Endonuclease that specifically degrades the RNA of RNA-DNA hybrids. The protein is Ribonuclease HII of Saccharophagus degradans (strain 2-40 / ATCC 43961 / DSM 17024).